Reading from the N-terminus, the 356-residue chain is Fructose-bisphosphate aldolase 1, chloroplastic (356 aa).

The N-terminal 6 residues, 1-6 (GLTIRA), are a transit peptide targeting the chloroplast. Positions 53 and 143 each coordinate substrate. The active-site Proton acceptor is the E183. K225 serves as the catalytic Schiff-base intermediate with dihydroxyacetone-P.

The protein belongs to the class I fructose-bisphosphate aldolase family.

Its subcellular location is the plastid. It localises to the chloroplast. The catalysed reaction is beta-D-fructose 1,6-bisphosphate = D-glyceraldehyde 3-phosphate + dihydroxyacetone phosphate. It participates in carbohydrate degradation; glycolysis; D-glyceraldehyde 3-phosphate and glycerone phosphate from D-glucose: step 4/4. This Pisum sativum (Garden pea) protein is Fructose-bisphosphate aldolase 1, chloroplastic.